The following is a 250-amino-acid chain: MKKPLFFIASACVTIYILFALSPSVYAMHIMEGFLPWQWALVWWLLFLPFFLVGMRNVARLMRQRPEVKLLLALATAFTFVLSALKIPSVTGSSSHPTGTGLGALLFGPFVMTVIGTAVLLFQALLLAHGGVTTLGANAFSMAVVGPLVAYVLFSLCKKFGVSTRVSVFLAAMMADLATYVMTSIQLALAFPDATSGVWGAFLKFASIFAVTQIPLAITEGLLTVVVWNFLHTYSKRELTILQQKGATIE.

Positions 1 to 27 are cleaved as a signal peptide; it reads MKKPLFFIASACVTIYILFALSPSVYA. Transmembrane regions (helical) follow at residues 33-53, 70-90, 102-122, 134-154, 168-188, and 208-228; these read GFLP…FFLV, LLLA…IPSV, LGAL…VLLF, TLGA…YVLF, VFLA…IQLA, and IFAV…VVVW.

The protein belongs to the CbiM family. Forms an energy-coupling factor (ECF) transporter complex composed of an ATP-binding protein (A component, CbiO), a transmembrane protein (T component, CbiQ) and 2 possible substrate-capture proteins (S components, CbiM and CbiN) of unknown stoichimetry.

The protein localises to the cell membrane. The protein operates within cofactor biosynthesis; adenosylcobalamin biosynthesis. Its function is as follows. Part of the energy-coupling factor (ECF) transporter complex CbiMNOQ involved in cobalt import. In Anoxybacillus flavithermus (strain DSM 21510 / WK1), this protein is Cobalt transport protein CbiM.